The chain runs to 158 residues: Transcription elongation factor GreA (158 aa).

Residues 49 to 73 (QAAREQQGFIEGRIKEIEAKLANAQ) adopt a coiled-coil conformation.

Belongs to the GreA/GreB family.

Functionally, necessary for efficient RNA polymerase transcription elongation past template-encoded arresting sites. The arresting sites in DNA have the property of trapping a certain fraction of elongating RNA polymerases that pass through, resulting in locked ternary complexes. Cleavage of the nascent transcript by cleavage factors such as GreA or GreB allows the resumption of elongation from the new 3'terminus. GreA releases sequences of 2 to 3 nucleotides. The sequence is that of Transcription elongation factor GreA from Methylococcus capsulatus (strain ATCC 33009 / NCIMB 11132 / Bath).